Consider the following 208-residue polypeptide: Small ribosomal subunit protein uS5 (208 aa).

The span at 1–19 shows a compositional bias: polar residues; sequence MTDSNNQSPNKKTSGSSGA. Residues 1–54 are disordered; sequence MTDSNNQSPNKKTSGSSGAPTAADGRQENRRSRGEKRGGRRDRRGQERDSEWQE. Composition is skewed to basic and acidic residues over residues 25-37 and 44-54; these read GRQE…GEKR and RGQERDSEWQE. The region spanning 52 to 115 is the S5 DRBM domain; the sequence is WQERVVQIRR…ADGKKHLVRV (64 aa).

The protein belongs to the universal ribosomal protein uS5 family. In terms of assembly, part of the 30S ribosomal subunit. Contacts proteins S4 and S8.

With S4 and S12 plays an important role in translational accuracy. In terms of biological role, located at the back of the 30S subunit body where it stabilizes the conformation of the head with respect to the body. This is Small ribosomal subunit protein uS5 from Prochlorococcus marinus (strain NATL1A).